The sequence spans 507 residues: Glycogen synthase (507 aa).

Lys15 is a binding site for ADP-alpha-D-glucose.

It belongs to the glycosyltransferase 1 family. Bacterial/plant glycogen synthase subfamily.

It catalyses the reaction [(1-&gt;4)-alpha-D-glucosyl](n) + ADP-alpha-D-glucose = [(1-&gt;4)-alpha-D-glucosyl](n+1) + ADP + H(+). It participates in glycan biosynthesis; glycogen biosynthesis. Its function is as follows. Synthesizes alpha-1,4-glucan chains using ADP-glucose. The protein is Glycogen synthase of Rhodopirellula baltica (strain DSM 10527 / NCIMB 13988 / SH1).